Consider the following 406-residue polypeptide: S-adenosylmethionine synthase (406 aa).

His17 lines the ATP pocket. Asp19 lines the Mg(2+) pocket. Glu45 contacts K(+). L-methionine is bound by residues Glu58 and Gln101. Residues 101-111 (QSAEINQGVAR) are flexible loop. ATP contacts are provided by residues 178 to 180 (DGK), Asp258, 264 to 265 (RK), Ala281, and Lys285. Asp258 is a binding site for L-methionine. Position 289 (Lys289) interacts with L-methionine.

It belongs to the AdoMet synthase family. In terms of assembly, homotetramer; dimer of dimers. Mg(2+) is required as a cofactor. The cofactor is K(+).

It is found in the cytoplasm. The catalysed reaction is L-methionine + ATP + H2O = S-adenosyl-L-methionine + phosphate + diphosphate. It participates in amino-acid biosynthesis; S-adenosyl-L-methionine biosynthesis; S-adenosyl-L-methionine from L-methionine: step 1/1. Its function is as follows. Catalyzes the formation of S-adenosylmethionine (AdoMet) from methionine and ATP. The overall synthetic reaction is composed of two sequential steps, AdoMet formation and the subsequent tripolyphosphate hydrolysis which occurs prior to release of AdoMet from the enzyme. In Bifidobacterium longum (strain NCC 2705), this protein is S-adenosylmethionine synthase.